Here is a 129-residue protein sequence, read N- to C-terminus: Putative CC-type chemokine FPV061 (129 aa).

Belongs to the intercrine beta (chemokine CC) family. Highly divergent.

This Fowlpox virus (strain NVSL) (FPV) protein is Putative CC-type chemokine FPV061.